The primary structure comprises 274 residues: Putative outer membrane protein CPn_1073/CP_0776/CPj1073/CpB1118 (274 aa).

Residues 1-21 form the signal peptide; it reads MRRYLFMVLALCLYRAAPLEA.

The protein resides in the cell outer membrane. This Chlamydia pneumoniae (Chlamydophila pneumoniae) protein is Putative outer membrane protein CPn_1073/CP_0776/CPj1073/CpB1118.